We begin with the raw amino-acid sequence, 303 residues long: Recombination-associated protein RdgC (303 aa).

The protein belongs to the RdgC family.

The protein localises to the cytoplasm. Its subcellular location is the nucleoid. Functionally, may be involved in recombination. The sequence is that of Recombination-associated protein RdgC from Yersinia pseudotuberculosis serotype O:1b (strain IP 31758).